The sequence spans 341 residues: Phenylalanine--tRNA ligase alpha subunit (341 aa).

Residue Glu-256 participates in Mg(2+) binding.

Belongs to the class-II aminoacyl-tRNA synthetase family. Phe-tRNA synthetase alpha subunit type 1 subfamily. In terms of assembly, tetramer of two alpha and two beta subunits. The cofactor is Mg(2+).

The protein localises to the cytoplasm. The enzyme catalyses tRNA(Phe) + L-phenylalanine + ATP = L-phenylalanyl-tRNA(Phe) + AMP + diphosphate + H(+). The polypeptide is Phenylalanine--tRNA ligase alpha subunit (Chlamydia caviae (strain ATCC VR-813 / DSM 19441 / 03DC25 / GPIC) (Chlamydophila caviae)).